A 728-amino-acid chain; its full sequence is 1,4-alpha-glucan branching enzyme GlgB (728 aa).

Aspartate 405 acts as the Nucleophile in catalysis. Glutamate 458 serves as the catalytic Proton donor.

The protein belongs to the glycosyl hydrolase 13 family. GlgB subfamily. As to quaternary structure, monomer.

The catalysed reaction is Transfers a segment of a (1-&gt;4)-alpha-D-glucan chain to a primary hydroxy group in a similar glucan chain.. The protein operates within glycan biosynthesis; glycogen biosynthesis. In terms of biological role, catalyzes the formation of the alpha-1,6-glucosidic linkages in glycogen by scission of a 1,4-alpha-linked oligosaccharide from growing alpha-1,4-glucan chains and the subsequent attachment of the oligosaccharide to the alpha-1,6 position. In Shigella flexneri, this protein is 1,4-alpha-glucan branching enzyme GlgB.